The primary structure comprises 119 residues: Thioredoxin H4 (119 aa).

Residues 2–115 enclose the Thioredoxin domain; the sequence is AAEEGQVIGC…LQAKIVKHTG (114 aa). Residues Cys-40 and Cys-43 each act as nucleophile in the active site. Cysteines 40 and 43 form a disulfide.

This sequence belongs to the thioredoxin family. Plant H-type subfamily. In terms of assembly, interacts with MDH1.

It localises to the cytoplasm. In terms of biological role, thiol-disulfide oxidoreductase probably involved in the redox regulation of a number of cytosolic enzymes. Possesses insulin disulfide bonds reducing activity. This Arabidopsis thaliana (Mouse-ear cress) protein is Thioredoxin H4 (TRX4).